Consider the following 212-residue polypeptide: 3-isopropylmalate dehydratase small subunit (212 aa).

Belongs to the LeuD family. LeuD type 1 subfamily. In terms of assembly, heterodimer of LeuC and LeuD.

It catalyses the reaction (2R,3S)-3-isopropylmalate = (2S)-2-isopropylmalate. It participates in amino-acid biosynthesis; L-leucine biosynthesis; L-leucine from 3-methyl-2-oxobutanoate: step 2/4. Its function is as follows. Catalyzes the isomerization between 2-isopropylmalate and 3-isopropylmalate, via the formation of 2-isopropylmaleate. The sequence is that of 3-isopropylmalate dehydratase small subunit from Nitrosomonas eutropha (strain DSM 101675 / C91 / Nm57).